A 573-amino-acid chain; its full sequence is Splicing factor U2af large subunit A (573 aa).

Residues 1–175 (MSEFEDHEGN…KSKQRVSGFD (175 aa)) form a disordered region. A compositionally biased stretch (basic and acidic residues) spans 22–93 (NGGRDGEIED…ERSRDKDRDH (72 aa)). Residues 94-105 (RERHHRSSRHRD) are compositionally biased toward basic residues. Positions 106-141 (HSRERGERRERGGRDDDDYRRSRDRDHDRRRDDRGG) are enriched in basic and acidic residues. Positions 159-169 (TRSRSPSKSKQ) are enriched in basic residues. RRM domains lie at 239-322 (RRVY…RPSD), 359-437 (DRIF…RANQ), and 478-564 (QVVT…YPED).

The protein belongs to the splicing factor SR family. Component of the spliceosome. Interacts with SUA. Interacts with SF1 in the nucleus.

The protein resides in the nucleus. Necessary for the splicing of pre-mRNA. The protein is Splicing factor U2af large subunit A of Arabidopsis thaliana (Mouse-ear cress).